The chain runs to 683 residues: Methionine--tRNA ligase (683 aa).

The 'HIGH' region signature appears at 15–25 (YYPSGKLHIGN). Residues 311 to 315 (KMSKS) carry the 'KMSKS' region motif. Residue K314 participates in ATP binding. Residues 581 to 683 (DFDKVELKVA…DNMVNGSLIS (103 aa)) enclose the tRNA-binding domain.

Belongs to the class-I aminoacyl-tRNA synthetase family. MetG type 2B subfamily. In terms of assembly, homodimer.

Its subcellular location is the cytoplasm. It carries out the reaction tRNA(Met) + L-methionine + ATP = L-methionyl-tRNA(Met) + AMP + diphosphate. Is required not only for elongation of protein synthesis but also for the initiation of all mRNA translation through initiator tRNA(fMet) aminoacylation. This is Methionine--tRNA ligase from Lactiplantibacillus plantarum (strain ATCC BAA-793 / NCIMB 8826 / WCFS1) (Lactobacillus plantarum).